Consider the following 485-residue polypeptide: Serine/threonine-protein kinase 4 (485 aa).

One can recognise a Protein kinase domain in the interval 30–281 (FDVLEKLGEG…ATELLQHPFI (252 aa)). ATP-binding positions include 36–44 (LGEGSYGSV) and Lys59. Catalysis depends on Asp149, which acts as the Proton acceptor. Residue Thr183 is modified to Phosphothreonine; by autocatalysis. The SARAH domain occupies 431–478 (YSFLKDWSVAEVQLKLNSLDPMMEREIEEIHHKYQAKRQPILEAIESK).

This sequence belongs to the protein kinase superfamily. STE Ser/Thr protein kinase family. STE20 subfamily. Homodimer; mediated via the coiled-coil region. It depends on Mg(2+) as a cofactor. Autophosphorylated on Thr-183. In terms of processing, proteolytically cleaved by caspase-3 during apoptosis at Asp-326 resulting in a 37 kDa form. Proteolytic cleavage results in kinase activation and nuclear translocation of the truncated form (MST1/N).

It localises to the cytoplasm. The protein localises to the nucleus. It carries out the reaction L-seryl-[protein] + ATP = O-phospho-L-seryl-[protein] + ADP + H(+). The catalysed reaction is L-threonyl-[protein] + ATP = O-phospho-L-threonyl-[protein] + ADP + H(+). With respect to regulation, the C-terminal non-catalytic region inhibits the kinase activity, the enzyme is activated by caspase-cleavage. Homodimerization and autophosphorylation of Thr-183 is also required for full activation. In terms of biological role, stress-activated, pro-apoptotic kinase which, following caspase-cleavage, enters the nucleus and induces chromatin condensation followed by internucleosomal DNA fragmentation. Key component of the Hippo signaling pathway which plays a pivotal role in organ size control and tumor suppression by restricting proliferation and promoting apoptosis. The core of this pathway is composed of a kinase cascade wherein stk3/mst2 and stk4/mst1, in complex with its regulatory protein sav1, phosphorylates and activates lats1/2 in complex with its regulatory protein mob1, which in turn phosphorylates and inactivates yap1 oncoprotein and wwtr1/taz. Phosphorylation of yap1 by lats2 inhibits its translocation into the nucleus to regulate cellular genes important for cell proliferation, cell death, and cell migration. Phosphorylates 'Ser-14' of histone H2B (H2BS14ph) during apoptosis. The protein is Serine/threonine-protein kinase 4 (stk4) of Xenopus laevis (African clawed frog).